The chain runs to 239 residues: MLKQTLLYTGKAKSVYETDSADHLILVFRDDASAFNGEKIEQLDRKGKVNNRFNAFIMEKLAEAGIETHFEKLLTPNEVLVKKLNMIPVECVIRNYAAGSLCRRLGVEEGKQLTPPTFELFFKDDALGDPMVNESQAIALGWATADQLEKMKELTYQVNDVLKALFDAGNMILVDFKLEFGVFHDRIVLGDEFSPDGCRLWDKDTKKKLDKDRFRQGLGGVVEAYEEVAARLGINLDDI.

Belongs to the SAICAR synthetase family.

The catalysed reaction is 5-amino-1-(5-phospho-D-ribosyl)imidazole-4-carboxylate + L-aspartate + ATP = (2S)-2-[5-amino-1-(5-phospho-beta-D-ribosyl)imidazole-4-carboxamido]succinate + ADP + phosphate + 2 H(+). It participates in purine metabolism; IMP biosynthesis via de novo pathway; 5-amino-1-(5-phospho-D-ribosyl)imidazole-4-carboxamide from 5-amino-1-(5-phospho-D-ribosyl)imidazole-4-carboxylate: step 1/2. This is Phosphoribosylaminoimidazole-succinocarboxamide synthase from Acinetobacter baylyi (strain ATCC 33305 / BD413 / ADP1).